An 88-amino-acid chain; its full sequence is Small ribosomal subunit protein eS25B (88 aa).

Belongs to the eukaryotic ribosomal protein eS25 family. Component of the small ribosomal subunit (SSU). Mature yeast ribosomes consist of a small (40S) and a large (60S) subunit. The 40S small subunit contains 1 molecule of ribosomal RNA (18S rRNA) and at least 33 different proteins. The large 60S subunit contains 3 rRNA molecules (25S, 5.8S and 5S rRNA) and at least 46 different proteins.

The protein localises to the cytoplasm. Its function is as follows. Component of the ribosome, a large ribonucleoprotein complex responsible for the synthesis of proteins in the cell. The small ribosomal subunit (SSU) binds messenger RNAs (mRNAs) and translates the encoded message by selecting cognate aminoacyl-transfer RNA (tRNA) molecules. The large subunit (LSU) contains the ribosomal catalytic site termed the peptidyl transferase center (PTC), which catalyzes the formation of peptide bonds, thereby polymerizing the amino acids delivered by tRNAs into a polypeptide chain. The nascent polypeptides leave the ribosome through a tunnel in the LSU and interact with protein factors that function in enzymatic processing, targeting, and the membrane insertion of nascent chains at the exit of the ribosomal tunnel. This Schizosaccharomyces pombe (strain 972 / ATCC 24843) (Fission yeast) protein is Small ribosomal subunit protein eS25B (rps2501).